The chain runs to 316 residues: L-lactate dehydrogenase 3 (316 aa).

Residues valine 16, aspartate 37, arginine 42, and tyrosine 68 each coordinate NAD(+). Residue arginine 91 coordinates substrate. Residues serine 104, 121–123 (ASN), and threonine 146 each bind NAD(+). 123–126 (NPVD) lines the substrate pocket. 151–154 (DSSR) contributes to the substrate binding site. Beta-D-fructose 1,6-bisphosphate-binding residues include arginine 156 and histidine 171. Residue histidine 178 is the Proton acceptor of the active site. Threonine 233 lines the substrate pocket.

Belongs to the LDH/MDH superfamily. LDH family. In terms of assembly, homotetramer.

The protein resides in the cytoplasm. It carries out the reaction (S)-lactate + NAD(+) = pyruvate + NADH + H(+). The protein operates within fermentation; pyruvate fermentation to lactate; (S)-lactate from pyruvate: step 1/1. With respect to regulation, allosterically activated by fructose 1,6-bisphosphate (FBP). Catalyzes the conversion of lactate to pyruvate. The protein is L-lactate dehydrogenase 3 of Bacillus anthracis.